We begin with the raw amino-acid sequence, 946 residues long: MIGAFARKLFGSSNDRRIKAYQARVAAINALEPDVAALSDEALRARTDQFRAELAAGKTLDDLLIPAFATVREAAKRTLGQRHFDVQLIGGMVLHEGDIAEMKTGEGKTLVATLACYLNALAGKGVHVVTVNDYLASRDAGWMGQIYAFLGMSTGVIVHGLDDSQRQKAYACDITYGTNNEYGFDYLRDNMKYRLEDMAQRGHFFAIVDEVDSILIDEARTPLIISGPLDDRSEFYNTIDTFIPRLDKSDYDVDEKQRSVALTEAGMEKIETLLRDAGQLKGESLYDIENVSVVHHINQALRAHTLFQRDKDYIVRNDEVVIIDEFTGRMMQGRRYSEGLHQALEAKEHVTVQPENQTLASITFQNYFRMYGKLAGMTGTAATEADEFYDIYKLEVVEIPTNVTIARLDEDDEVYRTQTEKYAAILAEVERANKRLQPVLVGTASIEKSEVLADVLLKSGYKQIDFGDPKALEKLYAAARAGKPAKLFAVLNARFHEQEAYIVAEAGVPGAITIATNMAGRGTDIKLGGSLEMRIQQETADITDEAEKAARIEQIKADIERFRQIVLNAEDEVEIEPAKGNKPAKTAKRPGGLYIIGSERHESRRIDNQLRGRSGRQGDPGRSKFFLSLEDDLMRIFGSGKLDTMLTRLGLKEGEAIIHPWINKALEKAQQKVEARNFDIRKNLLKFDDVQNDQRKVIFDQRIELMKEDSVVETVTDMRHTFIEDLVSKHVPEHAYAEQWDVAGLKEELNRVVGLDIPVDEWAKEEGIADEELLVRLEKVFDEHMAAKVAQWGPDVMRYAEKSILLQTLDHLWREHLVMLDHLRQVIGLRGYGQRDPLQEYKSEAFNLFQEMSAHLREAVTAQLMRVEIIPPEQPRELPPMEVHKMDPNTGEDEMQFANVSLAPADTVEKSERDPNRPESWGKVGRNEDCPCGSGKKYKHCHGRYA.

Residues Gln-87, 105-109 (GEGKT), and Asp-524 each bind ATP. Disordered stretches follow at residues 872–892 (PEQP…NTGE) and 904–946 (PADT…GRYA). Basic and acidic residues predominate over residues 907–917 (TVEKSERDPNR). Positions 930, 932, 941, and 942 each coordinate Zn(2+). The span at 936-946 (KKYKHCHGRYA) shows a compositional bias: basic residues.

The protein belongs to the SecA family. As to quaternary structure, monomer and homodimer. Part of the essential Sec protein translocation apparatus which comprises SecA, SecYEG and auxiliary proteins SecDF-YajC and YidC. Zn(2+) serves as cofactor.

It localises to the cell inner membrane. The protein resides in the cytoplasm. It carries out the reaction ATP + H2O + cellular proteinSide 1 = ADP + phosphate + cellular proteinSide 2.. Part of the Sec protein translocase complex. Interacts with the SecYEG preprotein conducting channel. Has a central role in coupling the hydrolysis of ATP to the transfer of proteins into and across the cell membrane, serving both as a receptor for the preprotein-SecB complex and as an ATP-driven molecular motor driving the stepwise translocation of polypeptide chains across the membrane. The sequence is that of Protein translocase subunit SecA from Rhodopseudomonas palustris (strain BisB5).